The chain runs to 558 residues: Membrane protein insertase YidC (558 aa).

A run of 5 helical transmembrane segments spans residues 6 to 26 (SFFI…WDDE), 359 to 379 (FIHT…TVII), 434 to 454 (LGGC…YYML), 480 to 500 (ILPI…PTTI), and 513 to 533 (LVIF…YYII).

This sequence belongs to the OXA1/ALB3/YidC family. Type 1 subfamily. In terms of assembly, interacts with the Sec translocase complex via SecD. Specifically interacts with transmembrane segments of nascent integral membrane proteins during membrane integration.

Its subcellular location is the cell inner membrane. Its function is as follows. Required for the insertion and/or proper folding and/or complex formation of integral membrane proteins into the membrane. Involved in integration of membrane proteins that insert both dependently and independently of the Sec translocase complex, as well as at least some lipoproteins. Aids folding of multispanning membrane proteins. This is Membrane protein insertase YidC from Blochmanniella floridana.